A 142-amino-acid polypeptide reads, in one-letter code: Probable pilin MJ0832.1 (142 aa).

Residues 1–8 (MLKFRKRG) constitute a propeptide that is removed on maturation. A QXSXEXXXL motif is present at residues 9-17 (QISLEFSLL).

In terms of processing, the N-terminus is cleaved by the prepilin peptidase EppA, which recognizes the class III signal sequence.

Its subcellular location is the secreted. The protein resides in the cell surface. It localises to the fimbrium. This Methanocaldococcus jannaschii (strain ATCC 43067 / DSM 2661 / JAL-1 / JCM 10045 / NBRC 100440) (Methanococcus jannaschii) protein is Probable pilin MJ0832.1.